The following is a 407-amino-acid chain: 5-aminolevulinate synthase 1 (407 aa).

Residues Arg-21, Ser-137, and Lys-156 each coordinate substrate. Residues Ser-189, His-217, and Thr-245 each coordinate pyridoxal 5'-phosphate. Residue Lys-248 is part of the active site. Lys-248 carries the N6-(pyridoxal phosphate)lysine modification. Residues Ser-277 and Thr-278 each coordinate pyridoxal 5'-phosphate. Substrate is bound at residue Thr-363.

It belongs to the class-II pyridoxal-phosphate-dependent aminotransferase family. In terms of assembly, homodimer. It depends on pyridoxal 5'-phosphate as a cofactor.

It catalyses the reaction succinyl-CoA + glycine + H(+) = 5-aminolevulinate + CO2 + CoA. The protein operates within porphyrin-containing compound metabolism; protoporphyrin-IX biosynthesis; 5-aminolevulinate from glycine: step 1/1. The chain is 5-aminolevulinate synthase 1 (hemA) from Cereibacter sphaeroides (strain ATCC 17023 / DSM 158 / JCM 6121 / CCUG 31486 / LMG 2827 / NBRC 12203 / NCIMB 8253 / ATH 2.4.1.) (Rhodobacter sphaeroides).